The following is a 337-amino-acid chain: Zinc finger protein 488 (337 aa).

The span at 1-10 (MAAGTSTLLS) shows a compositional bias: polar residues. Disordered regions lie at residues 1–32 (MAAGTSTLLSLSGPADHMAEGKGAPLRPSVEK), 55–83 (SDTAAGKGSQDEAYTELSLPTAPNKPRLD), and 146–179 (SAWPGAPRSEQKSAFSKPAKRPAEKPKRSPMLLA). An important for transcriptional repression activity region spans residues 69–184 (TELSLPTAPN…PMLLAGGSAE (116 aa)). C2H2-type zinc fingers lie at residues 272 to 299 (NWCAKCNLAFRLTADLVFHMRSHHKREH) and 314 to 336 (LTCPVCHEYFRERHHLSRHMASH). The Nuclear localization signal signature appears at 295–302 (HKREHVGP).

This sequence belongs to the krueppel C2H2-type zinc-finger protein family. In terms of assembly, interacts with OLIG2.

It is found in the nucleus. In terms of biological role, transcriptional repressor. Plays a role in oligodendrocyte differentiation, together with OLIG2. Mediates Notch signaling-activated formation of oligodendrocyte precursors. Promotes differentiation of adult neural stem progenitor cells (NSPCs) into mature oligodendrocytes and contributes to remyelination following nerve injury. This Mus musculus (Mouse) protein is Zinc finger protein 488 (Znf488).